The chain runs to 121 residues: Large ribosomal subunit protein uL22 (121 aa).

Belongs to the universal ribosomal protein uL22 family. In terms of assembly, part of the 50S ribosomal subunit.

Its function is as follows. This protein binds specifically to 23S rRNA; its binding is stimulated by other ribosomal proteins, e.g. L4, L17, and L20. It is important during the early stages of 50S assembly. It makes multiple contacts with different domains of the 23S rRNA in the assembled 50S subunit and ribosome. The globular domain of the protein is located near the polypeptide exit tunnel on the outside of the subunit, while an extended beta-hairpin is found that lines the wall of the exit tunnel in the center of the 70S ribosome. The chain is Large ribosomal subunit protein uL22 from Synechocystis sp. (strain ATCC 27184 / PCC 6803 / Kazusa).